Reading from the N-terminus, the 92-residue chain is Small ribosomal subunit protein uS19 (92 aa).

The protein belongs to the universal ribosomal protein uS19 family.

Its function is as follows. Protein S19 forms a complex with S13 that binds strongly to the 16S ribosomal RNA. The protein is Small ribosomal subunit protein uS19 (rpsS) of Halalkalibacterium halodurans (strain ATCC BAA-125 / DSM 18197 / FERM 7344 / JCM 9153 / C-125) (Bacillus halodurans).